Reading from the N-terminus, the 457-residue chain is Transcription termination factor Rho (457 aa).

The interval 1–23 is disordered; sequence MNTTNKQLTEELNNTESNNDHND. In terms of domain architecture, Rho RNA-BD spans 77–152; it reads LIVGEGVLEV…LKVNRVNFED (76 aa). Residues 200-205, 212-217, and Arg243 each bind ATP; these read GKGQRA and RTGKTV.

The protein belongs to the Rho family. In terms of assembly, homohexamer. The homohexamer assembles into an open ring structure.

Facilitates transcription termination by a mechanism that involves Rho binding to the nascent RNA, activation of Rho's RNA-dependent ATPase activity, and release of the mRNA from the DNA template. This is Transcription termination factor Rho from Rickettsia prowazekii (strain Madrid E).